Reading from the N-terminus, the 229-residue chain is Wtf element wtf14 (229 aa).

Over residues 1–26 (MENNHHLAKDSLDELNPKRGKGEHET) the composition is skewed to basic and acidic residues. The interval 1–27 (MENNHHLAKDSLDELNPKRGKGEHETQ) is disordered. The next 4 membrane-spanning stretches (helical) occupy residues 71 to 91 (IPAV…YLVF), 100 to 120 (VLFG…LLAT), 151 to 171 (LYAI…LMFF), and 188 to 208 (VIGV…PGLF).

Belongs to the WTF family.

The protein localises to the endoplasmic reticulum membrane. In terms of biological role, may act in meiotic drive. This Schizosaccharomyces pombe (strain 972 / ATCC 24843) (Fission yeast) protein is Wtf element wtf14.